The primary structure comprises 653 residues: 23S rRNA 5-hydroxycytidine C2501 synthase (653 aa).

The protein belongs to the peptidase U32 family. Interacts with precursors of the 50S ribosomal subunit.

With respect to regulation, iron-sulfur clusters and prephenate are required for ho5C2501 formation. Responsible for the formation of the 5-hydroxycytidine modification at the C2501 position (ho5C2501) of 23S rRNA. May be a Fe-S protein that catalyzes ho5C2501 formation using prephenate as a hydroxyl group donor. This is 23S rRNA 5-hydroxycytidine C2501 synthase from Escherichia coli (strain K12).